A 217-amino-acid chain; its full sequence is Adapter protein MecA (217 aa).

It belongs to the MecA family. Homodimer.

In terms of biological role, enables the recognition and targeting of unfolded and aggregated proteins to the ClpC protease or to other proteins involved in proteolysis. The polypeptide is Adapter protein MecA (Listeria monocytogenes serotype 4b (strain CLIP80459)).